The sequence spans 75 residues: Defensin J1-1 (75 aa).

Residues 1-27 form the signal peptide; the sequence is MAGFSKVVATIFLMMLLVFATDMMAEA. 4 cysteine pairs are disulfide-bonded: cysteine 30–cysteine 74, cysteine 41–cysteine 61, cysteine 47–cysteine 68, and cysteine 51–cysteine 70.

Belongs to the DEFL family. As to quaternary structure, monomer. In terms of tissue distribution, expressed in orange and red ripe fruit and to a lesser extent in mature, green fruit. Present in trace in young, green fruit.

It is found in the secreted. Its function is as follows. Plant defense peptide with antifungal activity against F.oxysporum and B.cinerea. The chain is Defensin J1-1 from Capsicum annuum (Capsicum pepper).